Reading from the N-terminus, the 466-residue chain is MELGKTKSVHIVGIGGAGMSAIAELLLTSGFGVTGSDLSSGEVTERLSERGAVIYQGHKAEQVGESDVVVYSSAIRPAENVEIVAAEQAGIPVIKRDEMLGELMRYNYGVCVSGTHGKTTTTAMIATMLIEAGESPTVMIGGVSDYLKGSTVVGSGKYLVIEADEFDRAFLKLTPTIAVINSLESEHMDTYGTIEELRKAFIAFANKVPFYGRVICCVDWPEIRKLIPHLNRRYTTFGIDEPADVMASDMVMDKNRSRFTVRASGKEYPGVSLNVPGRHNVMNALAAFASGLELGIAPERIIAGLTRYSGMRRRFQIKYDNSAGVLVVDDYAHHPSEVKAAVKAARDGWPNAEIVAVFQPHLFSRTREFADEYGWALLRADKIYVADIYPSREKAADYPGVSGSLVAAAVHKAGGKHAEFIADRELLYQTVETCPQKSTVVLFMGAGDITHLSTRLAGEWINKFSA.

114-120 contacts ATP; the sequence is GTHGKTT.

Belongs to the MurCDEF family.

It is found in the cytoplasm. The enzyme catalyses UDP-N-acetyl-alpha-D-muramate + L-alanine + ATP = UDP-N-acetyl-alpha-D-muramoyl-L-alanine + ADP + phosphate + H(+). The protein operates within cell wall biogenesis; peptidoglycan biosynthesis. Cell wall formation. The protein is UDP-N-acetylmuramate--L-alanine ligase of Chlorobium phaeobacteroides (strain DSM 266 / SMG 266 / 2430).